The following is a 3365-amino-acid chain: Probable serine/threonine-protein kinase roco9 (3365 aa).

Disordered regions lie at residues 1-177 (MTSI…KSSK), 397-497 (ESTE…QPPQ), 944-985 (PIKK…GFLS), 1044-1098 (IHQQ…NNKI), and 1261-1301 (QNNL…ISKG). Over residues 8–27 (FDKKSKRSNEDTGEKEETKK) the composition is skewed to basic and acidic residues. 4 stretches are compositionally biased toward low complexity: residues 51–84 (LQQLQQQQDDEQQQQQQQFMEGDNNNNNTNSLNT), 100–116 (STNSTSYSSLRSSSTRS), 137–169 (SQTSESSDITSTSTTSPTMSAASSSSSSGTVKT), and 397–415 (ESTEVLTLSLSSSTSTLEP). Positions 243 to 437 (TPLYSLIKRQ…RLPQQSSDDN (195 aa)) constitute a Rho-GAP domain. Polar residues predominate over residues 421–434 (PLSTSTQRLPQQSS). 5 stretches are compositionally biased toward low complexity: residues 435 to 445 (DDNSNNDNNNK), 457 to 489 (NNDNNNINNDNGEIIPPSIQVTPPTSPQTQPKQ), 959 to 974 (SSPLSSLRSSKGIPSK), 1044 to 1096 (IHQQ…NNNN), and 1262 to 1301 (NNLNNNNGNKENSSSSSSSSSSTSTTPSITKKSSGSISKG). The Myotubularin phosphatase domain maps to 804 to 1484 (IWDIYSPLIE…DQIILWSSFF (681 aa)). LRR repeat units lie at residues 1510–1526 (SQKLTFLSIDRNLLSYF), 1527–1549 (STLTKLNLSRNYFNTFPIEIILL), 1550–1572 (SNLTHLWLQDNRIKSIPSSLLKL), 1576–1599 (KLKLQEFDLSHNLLESLHKSIYTL), 1600–1622 (STLTKLVLDNNKLIIIPESISKM), 1624–1645 (QLKCLSVQNNRLSSFPQALSLC), 1646–1668 (VGLEELYVQNNQIRELPLGFFKL), 1670–1691 (SLRMLDLRNNQITKFKCHKLDD), 1697–1720 (MNEIIHFRMGPNPLQKLSNQMFEM), 1722–1743 (SLIHLELTGCSLSTVPLKLLDN), 1744–1770 (LVNLEALYLNQNKLSEISIDFKRLFKL), 1772–1789 (VLDLSDNQFTNVPIHAML), 1790–1812 (PSLKKLYLHNNQLYNISFNDFNL), 1814–1835 (LLSELRLDGNKLTYVSPSIGTK), 1837–1861 (LSLTLLNLDRNPQITTLPHTLALLK), and 1863–1887 (LKSLIVNSNIMESPFRELETTDAIL). Residues 1932 to 1947 (SKEREKEKEKEKEKEK) are compositionally biased toward basic and acidic residues. 4 disordered regions span residues 1932–1963 (SKEREKEKEKEKEKEKEKKHKNIGYGSKDKDK), 2190–2389 (NNNN…NNGS), 2507–2567 (APST…LQTP), and 2674–2704 (SNQQQQQQQQSSTQHQHQHHHHQQQQQTSIN). Low complexity-rich tracts occupy residues 2190–2205 (NNNNNNNNNNNNNNNN), 2216–2389 (SINN…NNGS), 2522–2567 (NNTS…LQTP), and 2676–2688 (QQQQQQQQSSTQH). One can recognise a Protein kinase domain in the interval 3008–3269 (ELDPNPIGEG…KKLEEIELIL (262 aa)). Residues 3014 to 3022 (IGEGGTATV) and Lys-3035 each bind ATP. The active-site Proton acceptor is Asp-3132. The span at 3311–3333 (QQQKQQQLQQQKQSPKQLQQQKP) shows a compositional bias: low complexity. The tract at residues 3311-3365 (QQQKQQQLQQQKQSPKQLQQQKPLPTPPKQLSNNDSTPTKPLDDSSDSSSEDSNN) is disordered. Positions 3354–3365 (DSSDSSSEDSNN) are enriched in acidic residues.

Belongs to the protein kinase superfamily. TKL Ser/Thr protein kinase family. ROCO subfamily.

It catalyses the reaction L-seryl-[protein] + ATP = O-phospho-L-seryl-[protein] + ADP + H(+). It carries out the reaction L-threonyl-[protein] + ATP = O-phospho-L-threonyl-[protein] + ADP + H(+). The polypeptide is Probable serine/threonine-protein kinase roco9 (roco9) (Dictyostelium discoideum (Social amoeba)).